We begin with the raw amino-acid sequence, 342 residues long: Hypoxia responsive morphology factor C (342 aa).

A Bipartite nuclear localization signal motif is present at residues 46-68 (RMKIPRRKSEYSSHDRLKRARKI). The tract at residues 151–181 (ADDAWAYNAADMDTAVKFFSEAIYKAIESSP) is RNA recognition motif (RRM)-like domain.

It belongs to the hrmA family.

It is found in the nucleus. In terms of biological role, probably modulates the generation of the hypoxia-typic morphotype (called H-MORPH) with altered biofilm architecture that leads to increased host inflammation, rapid disease progression, and mortality in a murine model of invasive aspergillosis. In Aspergillus fumigatus (strain CBS 144.89 / FGSC A1163 / CEA10) (Neosartorya fumigata), this protein is Hypoxia responsive morphology factor C.